Here is a 313-residue protein sequence, read N- to C-terminus: MAEISAKLVQELRQKTGAGMMDCKKALKETEGDVEQAIDWLRKKGIASAGKKSDRIAAEGLVDTYIQPGGKVGVLIEVNCQTDFVARNDAFKTLVKNLAQQAATADSVESLLAQPYIEDANLTVDEAIKQTIANLGENIQVRRFINFALTDKTGVVDSYIHTGGRVGVLVELNSQSEAGAANEEVQNLARNAAMQVAACPNVEYVSVDQIPAEVVQREKDVESGKEDIANKPENIREKIVQGRIEKRLKELTLVDQPYIRDQSISVEDLVKQVKAKAGEEVEVSRFVRYILGEGIEKQESNFAEEVAAQMGVK.

The tract at residues 82–85 is involved in Mg(2+) ion dislocation from EF-Tu; it reads TDFV.

Belongs to the EF-Ts family.

It is found in the cytoplasm. Its function is as follows. Associates with the EF-Tu.GDP complex and induces the exchange of GDP to GTP. It remains bound to the aminoacyl-tRNA.EF-Tu.GTP complex up to the GTP hydrolysis stage on the ribosome. The polypeptide is Elongation factor Ts (Nostoc sp. (strain PCC 7120 / SAG 25.82 / UTEX 2576)).